A 149-amino-acid chain; its full sequence is 3-dehydroquinate dehydratase (149 aa).

The active-site Proton acceptor is the tyrosine 23. Residues asparagine 75, histidine 81, and aspartate 88 each coordinate substrate. Catalysis depends on histidine 101, which acts as the Proton donor. Substrate is bound by residues 102-103 and arginine 112; that span reads MS.

Belongs to the type-II 3-dehydroquinase family. Homododecamer.

It catalyses the reaction 3-dehydroquinate = 3-dehydroshikimate + H2O. It participates in metabolic intermediate biosynthesis; chorismate biosynthesis; chorismate from D-erythrose 4-phosphate and phosphoenolpyruvate: step 3/7. Its function is as follows. Catalyzes a trans-dehydration via an enolate intermediate. The sequence is that of 3-dehydroquinate dehydratase from Pelobacter propionicus (strain DSM 2379 / NBRC 103807 / OttBd1).